Reading from the N-terminus, the 87-residue chain is Small ribosomal subunit protein bS20 (87 aa).

Basic residues predominate over residues 1–11; the sequence is MANIKSKKKRI. The disordered stretch occupies residues 1–25; that stretch reads MANIKSKKKRIKTNEKARQRNKAIR.

It belongs to the bacterial ribosomal protein bS20 family.

Functionally, binds directly to 16S ribosomal RNA. The sequence is that of Small ribosomal subunit protein bS20 from Corynebacterium kroppenstedtii (strain DSM 44385 / JCM 11950 / CIP 105744 / CCUG 35717).